Here is a 152-residue protein sequence, read N- to C-terminus: UPF0178 protein Plav_1521 (152 aa).

Residues 114 to 152 (LRETGQSKGGGPAFSKEDRSRFLRSLEDTVQAIRRRPPP) are disordered. Basic and acidic residues predominate over residues 128–140 (SKEDRSRFLRSLE).

It belongs to the UPF0178 family.

The chain is UPF0178 protein Plav_1521 from Parvibaculum lavamentivorans (strain DS-1 / DSM 13023 / NCIMB 13966).